The following is a 699-amino-acid chain: Protein Scribble homolog let-413 (699 aa).

LRR repeat units follow at residues 37 to 59 (KLEDLNLTMNNIKELDHRLFSLR), 60 to 81 (HLRILDVSDNELAVLPAEIGNL), 83 to 104 (QLIELNLNRNSIAKLPDTMQNC), 106 to 127 (LLTTLNLSSNPFTRLPETICEC), 129 to 150 (SITILSLNETSLTLLPSNIGSL), 152 to 174 (NLRVLEARDNLLRTIPLSIVELR), 175 to 196 (KLEELDLGQNELEALPAEIGKL), 198 to 219 (SLREFYVDINSLTSLPDSISGC), 221 to 242 (MLDQLDVSENQIIRLPENLGRM), 244 to 265 (NLTDLNISINEIIELPSSFGEL), 267 to 288 (RLQMLKADRNSLHNLTSEIGKC), 290 to 311 (SLTELYLGQNFLTDLPDTIGDL), 313 to 334 (QLTTLNVDCNNLSDIPDTIGNC), 336 to 357 (SLTVLSLRQNILTELPMTIGKC), 359 to 380 (NLTVLDVASNKLPHLPFTVKVL), and 382 to 403 (KLQALWLSENQTQSILKLSETR). One can recognise a PDZ domain in the interval 584 to 665 (AGGTSNDPAP…RSPSPVSRTS (82 aa)). Positions 656–699 (RSPSPVSRTSEPSLNGSSHQLNHFDAGSPDSTMFVTSSTPVYAS) are disordered. Polar residues-rich tracts occupy residues 659-676 (SPVSRTSEPSLNGSSHQL) and 684-699 (PDSTMFVTSSTPVYAS).

It belongs to the LAP (LRR and PDZ) protein family. Expressed in the terminal web of the intestine. Expressed in seam cells. Expressed in the basolateral surfaces of epithelia and the nervous system. Expressed in the intestine, epidermis, excretory canal, reproductive system including vulva, uterus and spermatheca, in both larval and adult stage animals.

The protein localises to the basolateral cell membrane. Functionally, critical role in assembling adherens junctions; adapter protein involved in polarizing protein trafficking in epithelial cells. Necessary to maintain, not establish, the entire terminal web (organelle-depleted, intermediate filament-rich layer of cytoplasm that underlies the apical microvilli of polarized epithelial cells) or brush border assembly at the apical surface gut cells. Required for correct localization of ifb-2 intermediate filaments in the terminal web. Required for dlg-1 and hmr-1 lateral localization. Maintains cell polarity by correctly positioning adherens junction protein components including ajm-1 and hmp-1 at discrete subapical positions. Plays a role in the correct localization of the dlg-1-ajm-1 complex, polarity protein par-3, and actin microfilament to the apical junction of spermatheca cells, and is required for ovulation. Regulates the establishment of newly-formed epithelia in conjunction with dlg-1. Required in the epidermis during larval development. Plays a role in cellular junction integrity and in the directed outgrowth of seam cells, towards neighboring seam cells, during larval development; probably acts by promoting the assembly and stability of dlg-1 at apical junctions. This Caenorhabditis elegans protein is Protein Scribble homolog let-413.